Here is a 343-residue protein sequence, read N- to C-terminus: N-acetyl-gamma-glutamyl-phosphate reductase (343 aa).

The active site involves Cys-148.

This sequence belongs to the NAGSA dehydrogenase family. Type 1 subfamily.

Its subcellular location is the cytoplasm. The catalysed reaction is N-acetyl-L-glutamate 5-semialdehyde + phosphate + NADP(+) = N-acetyl-L-glutamyl 5-phosphate + NADPH + H(+). The protein operates within amino-acid biosynthesis; L-arginine biosynthesis; N(2)-acetyl-L-ornithine from L-glutamate: step 3/4. Its function is as follows. Catalyzes the NADPH-dependent reduction of N-acetyl-5-glutamyl phosphate to yield N-acetyl-L-glutamate 5-semialdehyde. The sequence is that of N-acetyl-gamma-glutamyl-phosphate reductase from Caldicellulosiruptor saccharolyticus (strain ATCC 43494 / DSM 8903 / Tp8T 6331).